A 517-amino-acid polypeptide reads, in one-letter code: ADP-ribosylation factor GTPase-activating protein 3 (517 aa).

In terms of domain architecture, Arf-GAP spans 10 to 126 (LTIFKRLRSV…IKALASQATR (117 aa)). The C4-type zinc finger occupies 25-48 (CFDCGAKNPSWASITYGVFLCIDC). A disordered region spans residues 139-200 (VPPSSPPPKE…EQGPSVEGLN (62 aa)). Over residues 159 to 176 (EVSSTGWASAQPEPSLTP) the composition is skewed to polar residues. A Phosphoserine modification is found at Ser231. Positions 243-263 (NEIEKQAQAVDKMNAQEDLLS) form a coiled coil. A phosphoserine mark is found at Ser271 and Ser275. The segment covering 291–305 (EKMNMSGKKKAESER) has biased composition (basic and acidic residues). Disordered stretches follow at residues 291–349 (EKMN…SDDS) and 362–422 (MELR…QKKF). Residues 312 to 333 (NSRSGISHSVTSDMQTIEQETP) show a composition bias toward polar residues. Residue Ser371 is modified to Phosphoserine. Residues 379 to 390 (YWKKETIKDTDP) show a composition bias toward basic and acidic residues. Ser429, Ser452, Ser454, Ser456, Ser458, and Ser459 each carry phosphoserine.

Its subcellular location is the cytoplasm. It is found in the golgi apparatus membrane. GAP activity stimulated by phosphatidylinositol 4,5-bisphosphate (PIP2). Its function is as follows. GTPase-activating protein (GAP) for ADP ribosylation factor 1 (ARF1). Hydrolysis of ARF1-bound GTP may lead to dissociation of coatomer from Golgi-derived membranes to allow fusion with target membranes. This Bos taurus (Bovine) protein is ADP-ribosylation factor GTPase-activating protein 3.